Consider the following 532-residue polypeptide: Eukaryotic translation initiation factor 4B1 (532 aa).

Disordered stretches follow at residues 16 to 365, 401 to 434, and 451 to 532; these read EAER…LEEQ, KKLE…IIRG, and RFRQ…REGW. Residues 26-35 are compositionally biased toward low complexity; that stretch reads AEATAATADT. Composition is skewed to gly residues over residues 105–120 and 132–147; these read RLGG…SGGR and WSGG…YGGG. Basic and acidic residues predominate over residues 167–180; the sequence is RADEVDDWGKEKKP. The Nuclear localization signal 1 motif lies at 177–184; it reads EKKPLPSF. Gly residues predominate over residues 193-217; the sequence is SGDGGGFGGGGSGFGGGGGGGGGGL. Residues 237–244 carry the Nuclear localization signal 2 motif; sequence SSTFGSSF. Low complexity predominate over residues 237 to 247; the sequence is SSTFGSSFGDS. 2 stretches are compositionally biased toward basic and acidic residues: residues 249–263 and 286–310; these read QEER…RKVE and RPRE…EAKK. A compositionally biased stretch (low complexity) spans 315 to 337; that stretch reads TSRPTSAHSSRPSSAQSNRSESS. 4 stretches are compositionally biased toward basic and acidic residues: residues 355–365, 401–416, 472–494, and 507–520; these read AKPREVLLEEQ, KKLE…KESD, ERTH…ERPR, and NEQR…KERG.

It belongs to the eIF-4 subunit B family. As to quaternary structure, homodimer. Nonspherical monomer. mRNA-discriminating component of initiation complexes. In terms of processing, phosphorylated.

It is found in the nucleus. Its function is as follows. Promotes the eIF4F and eIF4A RNA-dependent ATP-hydrolysis activity with different efficiency depending on mRNAs, thus providing mRNA discrimination during initiation of translation. The protein is Eukaryotic translation initiation factor 4B1 of Arabidopsis thaliana (Mouse-ear cress).